A 197-amino-acid polypeptide reads, in one-letter code: Surfactant protein C (197 aa).

A propeptide spanning residues 1 to 23 (MDVGSKEVLMESPPDYSAAPRGR) is cleaved from the precursor. Residues C28 and C29 are each lipidated (S-palmitoyl cysteine). Positions 59–197 (HMSQKHTEMV…LCGEVPLYYI (139 aa)) are excised as a propeptide. Positions 94-197 (FSIGSTGLVV…LCGEVPLYYI (104 aa)) constitute a BRICHOS domain. 2 cysteine pairs are disulfide-bonded: C120/C148 and C121/C189.

The protein resides in the secreted. Its subcellular location is the extracellular space. It is found in the surface film. In terms of biological role, pulmonary surfactant associated proteins promote alveolar stability by lowering the surface tension at the air-liquid interface in the peripheral air spaces. This chain is Surfactant protein C, found in Homo sapiens (Human).